The following is a 326-amino-acid chain: Aquaporin-4 (326 aa).

Over 1–39 (MSDGAGAAARRWGKCGGRSCSRESIMVAFKGVWTQAFWK) the chain is Cytoplasmic. 2 S-palmitoyl cysteine lipidation sites follow: Cys15 and Cys20. Residues 40 to 60 (AVTAEFLAMLIFVLLSVGSTI) form a helical membrane-spanning segment. Over 61–72 (NWGGSENPLPVD) the chain is Extracellular. A helical transmembrane segment spans residues 73-92 (MVLISLCFGLSIATMVQCFG). Residues 93–96 (HISG) are Cytoplasmic-facing. The segment at residues 97-104 (GHINPAVT) is an intramembrane region (discontinuously helical). Positions 100–102 (NPA) match the NPA 1 motif. The Cytoplasmic segment spans residues 105 to 118 (VAMVCTRKISIAKS). Ser114 is subject to Phosphoserine; by PKG. A helical transmembrane segment spans residues 119-139 (VFYITAQCLGAIIGAGILYLV). Residues 140–158 (TPPNVVGGLGVTTVHGNLT) are Extracellular-facing. Asn156 carries N-linked (GlcNAc...) asparagine glycosylation. Residues 159–179 (AGHGLLVELIITFQLVFTIFA) form a helical membrane-spanning segment. Over 180–187 (SCDSKRTD) the chain is Cytoplasmic. Ser183 is modified (phosphoserine; by PKC). A helical membrane pass occupies residues 188 to 208 (VTGSIALAIGFSVAIGHLFAI). Asn209 carries N-linked (GlcNAc...) asparagine glycosylation. At 209–211 (NYT) the chain is on the extracellular side. The segment at residues 212–225 (GASMNPARSFGPAV) is an intramembrane region (discontinuously helical). The NPA 2 signature appears at 216 to 218 (NPA). The Extracellular segment spans residues 226-234 (IMGNWENHW). The chain crosses the membrane as a helical span at residues 235–255 (IYWVGPIIGAVLAGALYEYVF). At 256 to 326 (CPDVELKRRL…DSAGEVLSSV (71 aa)) the chain is on the cytoplasmic side. Ser279 and Ser288 each carry phosphoserine. A Phosphothreonine modification is found at Thr292. Ser324 is subject to Phosphoserine.

This sequence belongs to the MIP/aquaporin (TC 1.A.8) family. Homotetramer. The tetramers can form oligomeric arrays in membranes. The size of the oligomers differs between tissues and is smaller in skeletal muscle than in brain. Interaction between AQP4 oligomeric arrays in close-by cells can contribute to cell-cell adhesion. Part of a complex containing MLC1, TRPV4, HEPACAM and ATP1B1. Phosphorylation by PKC at Ser-183 reduces conductance by 50%. Phosphorylation by PKG at Ser-114 in response to glutamate increases conductance by 40%. Post-translationally, isoform Long: Palmitoylated on its N-terminal region.

It is found in the cell membrane. The protein resides in the basolateral cell membrane. Its subcellular location is the endosome membrane. The protein localises to the sarcolemma. It localises to the cell projection. It carries out the reaction H2O(in) = H2O(out). In terms of biological role, forms a water-specific channel. Plays an important role in brain water homeostasis and in glymphatic solute transport. Required for a normal rate of water exchange across the blood brain interface. Required for normal levels of cerebrospinal fluid influx into the brain cortex and parenchyma along paravascular spaces that surround penetrating arteries, and for normal drainage of interstitial fluid along paravenous drainage pathways. Thereby, it is required for normal clearance of solutes from the brain interstitial fluid, including soluble beta-amyloid peptides derived from APP. Plays a redundant role in urinary water homeostasis and urinary concentrating ability. The polypeptide is Aquaporin-4 (AQP4) (Notomys alexis (Spinifex hopping mouse)).